The sequence spans 93 residues: UPF0728 protein C10orf53 homolog (93 aa).

The protein belongs to the UPF0728 family.

The sequence is that of UPF0728 protein C10orf53 homolog from Xenopus tropicalis (Western clawed frog).